A 344-amino-acid polypeptide reads, in one-letter code: uncharacterized protein (344 aa).

This sequence belongs to the glycosyltransferase 2 family.

This is an uncharacterized protein from Escherichia coli (strain K12).